The primary structure comprises 207 residues: LexA repressor (207 aa).

The segment at residues 28-48 is a DNA-binding region (H-T-H motif); it reads RAEIAQKLGFKSANAAEEHLK. Catalysis depends on for autocatalytic cleavage activity residues S124 and K161.

The protein belongs to the peptidase S24 family. Homodimer.

The enzyme catalyses Hydrolysis of Ala-|-Gly bond in repressor LexA.. Functionally, represses a number of genes involved in the response to DNA damage (SOS response), including recA and lexA. In the presence of single-stranded DNA, RecA interacts with LexA causing an autocatalytic cleavage which disrupts the DNA-binding part of LexA, leading to derepression of the SOS regulon and eventually DNA repair. The chain is LexA repressor from Aeromonas salmonicida (strain A449).